The following is a 271-amino-acid chain: Putative pirin-like protein At3g59260 (271 aa).

This sequence belongs to the pirin family.

Its subcellular location is the nucleus. In Arabidopsis thaliana (Mouse-ear cress), this protein is Putative pirin-like protein At3g59260.